A 150-amino-acid polypeptide reads, in one-letter code: Ribonuclease K6 (150 aa).

The first 23 residues, 1 to 23 (MVLCFPLLLLLLVLWGPVCLLHA), serve as a signal peptide directing secretion. His38 acts as the Proton acceptor in catalysis. 4 disulfide bridges follow: Cys46-Cys104, Cys60-Cys114, Cys78-Cys129, and Cys85-Cys92. Asn55 carries an N-linked (GlcNAc...) asparagine glycan. Substrate is bound by residues 61–65 (KHQNT) and Lys86. N-linked (GlcNAc...) asparagine glycosylation is present at Asn100. Arg105 is a substrate binding site. His145 serves as the catalytic Proton donor.

This sequence belongs to the pancreatic ribonuclease family. In terms of assembly, interacts (via N-terminus) with bacterial lipopolysaccharide (LPS).

The protein resides in the secreted. The protein localises to the lysosome. Its subcellular location is the cytoplasmic granule. Its function is as follows. Ribonuclease which shows a preference for the pyrimidines uridine and cytosine. Has potent antibacterial activity against a range of Gram-positive and Gram-negative bacteria, including P.aeruginosa, A.baumanii, M.luteus, S.aureus, E.faecalis, E.faecium, S.saprophyticus and E.coli. Causes loss of bacterial membrane integrity, and also promotes agglutination of Gram-negative bacteria. Probably contributes to urinary tract sterility. Bactericidal activity is independent of RNase activity. In Papio hamadryas (Hamadryas baboon), this protein is Ribonuclease K6 (RNASE6).